We begin with the raw amino-acid sequence, 463 residues long: Argininosuccinate lyase (463 aa).

It belongs to the lyase 1 family. Argininosuccinate lyase subfamily.

The protein localises to the cytoplasm. The catalysed reaction is 2-(N(omega)-L-arginino)succinate = fumarate + L-arginine. The protein operates within amino-acid biosynthesis; L-arginine biosynthesis; L-arginine from L-ornithine and carbamoyl phosphate: step 3/3. In Prochlorococcus marinus (strain NATL2A), this protein is Argininosuccinate lyase.